Reading from the N-terminus, the 67-residue chain is Protein LITTLE ZIPPER 3 (67 aa).

Positions 14-59 form a coiled coil; the sequence is YIMKENERLRKKAELLNQENQQLLFQLKQKLSKTKNSNNGSNNDNK. Positions 42-67 are disordered; sequence QKLSKTKNSNNGSNNDNKSSSASGQS.

Interacts with REV. Interacts with ATBH-8, ATBH-9, ATB-14 and ATB-15. In terms of tissue distribution, expressed in the adaxial epidermis of the cotyledons and leaves, and in the vascular cylinder of wild-type torpedo stage embryos. Confined in the central zone and the organizing center in the shoot apical meristem.

The protein resides in the nucleus. Its function is as follows. Competitive inhibitor of the HD-ZIPIII transcription factors in shoot apical meristem (SAM) development. Acts by forming non-functional heterodimers. Part of a negative feedback loop. Involved in SAM development and lateral organ patterning. Essential for proper functioning of stem cells in the SAM. In Arabidopsis thaliana (Mouse-ear cress), this protein is Protein LITTLE ZIPPER 3.